The chain runs to 296 residues: Inactive uridine phosphorylase B (296 aa).

Belongs to the PNP/UDP phosphorylase family. As to quaternary structure, homodimer.

This is Inactive uridine phosphorylase B from Schistosoma mansoni (Blood fluke).